Here is a 407-residue protein sequence, read N- to C-terminus: Methylthioribose kinase (407 aa).

ATP-binding positions include asparagine 40, lysine 57, and 111-113 (EDL). Aspartate 229 is a binding site for substrate. An ATP-binding site is contributed by 246-248 (DAE). Position 344 (arginine 344) interacts with substrate.

This sequence belongs to the methylthioribose kinase family. Homodimer.

The enzyme catalyses 5-(methylsulfanyl)-D-ribose + ATP = 5-(methylsulfanyl)-alpha-D-ribose 1-phosphate + ADP + H(+). It participates in amino-acid biosynthesis; L-methionine biosynthesis via salvage pathway; S-methyl-5-thio-alpha-D-ribose 1-phosphate from S-methyl-5'-thioadenosine (hydrolase route): step 2/2. Functionally, catalyzes the phosphorylation of methylthioribose into methylthioribose-1-phosphate. The protein is Methylthioribose kinase of Yersinia pseudotuberculosis serotype O:3 (strain YPIII).